A 703-amino-acid polypeptide reads, in one-letter code: DnaJ homolog subfamily C member 14 (703 aa).

A compositionally biased stretch (basic and acidic residues) spans 1–11 (MAQKHPGERRL). Positions 1-229 (MAQKHPGERR…GRHRLARKRS (229 aa)) are disordered. A compositionally biased stretch (low complexity) spans 17 to 28 (SGGTSLSTSGSS). A compositionally biased stretch (pro residues) spans 75 to 84 (HGPPRGPGPP). Residues 91-102 (DESETGSEESGV) show a composition bias toward acidic residues. The segment covering 121–133 (SFLSIPSACNCQG) has biased composition (polar residues). Acidic residues predominate over residues 163–176 (GEDEELEEEYDDEE). Residues 193–202 (PLSRRQKHRF) are compositionally biased toward basic residues. Residues 203–218 (LIKEDVRDSGRREPKA) are compositionally biased toward basic and acidic residues. A compositionally biased stretch (basic residues) spans 219–228 (PGRHRLARKR). 2 consecutive transmembrane segments (helical) span residues 305-325 (MMFQFLSQSFFCVVGLLIRIL) and 327-347 (VVGAFLLLALALFLGCLQLGW). Residues 444–508 (NPFHVLGVEA…ERRKEYEMKR (65 aa)) form the J domain. 2 disordered regions span residues 622-643 (FGSRVPGTSGRQRATPESPPAD) and 659-703 (MSNG…PFQR). The span at 673-684 (GTTSTSRPNSSV) shows a compositional bias: polar residues. Basic residues predominate over residues 691–703 (PKRRKKVRRPFQR).

In terms of assembly, interacts with the FxxxFxxxF motif of DRD1 via its C-terminal domain.

The protein resides in the endoplasmic reticulum membrane. Regulates the export of target proteins, such as DRD1, from the endoplasmic reticulum to the cell surface. This chain is DnaJ homolog subfamily C member 14 (Dnajc14), found in Mus musculus (Mouse).